Reading from the N-terminus, the 481-residue chain is 4-hydroxyphenylacetate 3-monooxygenase oxygenase component (481 aa).

Residues 100-104 (RSPDY) and histidine 142 each bind substrate. FAD is bound by residues 142–144 (HAL), 148–151 (QVNR), and threonine 185. 197–198 (ST) contributes to the substrate binding site. Residue 444–447 (DPVR) coordinates FAD.

The protein belongs to the FADH(2)-utilizing monooxygenase family. As to quaternary structure, homotetramer consisting of a dimer of dimers. 4-HPA 3-monooxygenase consists of a reductase component HpaC and an oxygenase component HpaB.

It carries out the reaction 4-hydroxyphenylacetate + FADH2 + O2 = 3,4-dihydroxyphenylacetate + FAD + H2O + H(+). It participates in aromatic compound metabolism; 4-hydroxyphenylacetate degradation; pyruvate and succinate semialdehyde from 4-hydroxyphenylacetate: step 1/7. Functionally, utilizes FADH(2) supplied by HpaC, to catalyze the hydroxylation of 4-hydroxyphenylacetic acid, leading to the production of 3,4-dihydroxyphenylacetic acid (DHPA). In Thermus thermophilus (strain ATCC 27634 / DSM 579 / HB8), this protein is 4-hydroxyphenylacetate 3-monooxygenase oxygenase component.